The following is a 421-amino-acid chain: Probable mitochondrial chaperone BCS1-A (421 aa).

The Mitochondrial intermembrane segment spans residues methionine 1–serine 10. A helical membrane pass occupies residues isoleucine 11–phenylalanine 31. Residues lysine 32–asparagine 421 lie on the Mitochondrial matrix side of the membrane. Glycine 228–serine 235 contributes to the ATP binding site.

This sequence belongs to the AAA ATPase family. BCS1 subfamily.

It is found in the mitochondrion inner membrane. The catalysed reaction is ATP + H2O = ADP + phosphate + H(+). Chaperone necessary for the assembly of mitochondrial respiratory chain complex III. This is Probable mitochondrial chaperone BCS1-A (bcs1la) from Dictyostelium discoideum (Social amoeba).